The following is a 533-amino-acid chain: Peptide chain release factor 3 (533 aa).

In terms of domain architecture, tr-type G spans 9-284 (ARRRTFAIIS…ALCQLSPPPL (276 aa)). GTP contacts are provided by residues 18 to 25 (SHPDAGKT), 95 to 99 (DTPGH), and 149 to 152 (NKLD).

It belongs to the TRAFAC class translation factor GTPase superfamily. Classic translation factor GTPase family. PrfC subfamily.

The protein resides in the cytoplasm. Functionally, increases the formation of ribosomal termination complexes and stimulates activities of RF-1 and RF-2. It binds guanine nucleotides and has strong preference for UGA stop codons. It may interact directly with the ribosome. The stimulation of RF-1 and RF-2 is significantly reduced by GTP and GDP, but not by GMP. The protein is Peptide chain release factor 3 of Cupriavidus pinatubonensis (strain JMP 134 / LMG 1197) (Cupriavidus necator (strain JMP 134)).